We begin with the raw amino-acid sequence, 296 residues long: Nucleotide-binding protein stu0831 (296 aa).

13-20 (GMSGAGKT) provides a ligand contact to ATP. 63–66 (DMRS) is a GTP binding site.

This sequence belongs to the RapZ-like family.

Its function is as follows. Displays ATPase and GTPase activities. This chain is Nucleotide-binding protein stu0831, found in Streptococcus thermophilus (strain ATCC BAA-250 / LMG 18311).